The chain runs to 716 residues: Putative cuticle collagen 99 (716 aa).

Disordered regions lie at residues 85–122 (LPSS…PVGP) and 183–472 (PPGP…SLVA). 3 triple-helical region regions span residues 179-238 (GMPG…KGDR), 265-298 (LPGP…FDGE), and 302-330 (GPKG…EKGD). The segment covering 266 to 277 (PGPPGPPGPPGP) has biased composition (pro residues). A compositionally biased stretch (basic and acidic residues) spans 280 to 290 (RDGRHGLKGDR). A compositionally biased stretch (pro residues) spans 349-358 (PGPPGPPGPP). Triple-helical region stretches follow at residues 385-411 (GPPG…AGAA) and 422-467 (GPPG…GRHG). Over residues 389–401 (EKGERGERGEPGD) the composition is skewed to basic and acidic residues. Residues 402–422 (RGLPGAAGAANLLNGGKALVG) show a composition bias toward low complexity. A compositionally biased stretch (basic and acidic residues) spans 429-444 (RDGRPGDKGEKGEQGL). Asn-474 carries an N-linked (GlcNAc...) asparagine glycan. Positions 503 to 716 (KNVIPGPPGP…GAETRPPVTD (214 aa)) are disordered. 3 triple-helical region regions span residues 507-557 (PGPP…QPGA), 566-603 (GPRG…PPGP), and 605-664 (GLRG…PGLD). Over residues 568 to 577 (RGPPGLPGPP) the composition is skewed to pro residues.

Belongs to the cuticular collagen family. In terms of assembly, collagen polypeptide chains are complexed within the cuticle by disulfide bonds and other types of covalent cross-links.

In terms of biological role, nematode cuticles are composed largely of collagen-like proteins. The cuticle functions both as an exoskeleton and as a barrier to protect the worm from its environment. The sequence is that of Putative cuticle collagen 99 (col-99) from Caenorhabditis elegans.